Consider the following 309-residue polypeptide: Elongation factor Ts (309 aa).

Residues Thr-98–Val-101 form an involved in Mg(2+) ion dislocation from EF-Tu region.

The protein belongs to the EF-Ts family.

The protein resides in the cytoplasm. In terms of biological role, associates with the EF-Tu.GDP complex and induces the exchange of GDP to GTP. It remains bound to the aminoacyl-tRNA.EF-Tu.GTP complex up to the GTP hydrolysis stage on the ribosome. The polypeptide is Elongation factor Ts (Orientia tsutsugamushi (strain Boryong) (Rickettsia tsutsugamushi)).